A 365-amino-acid polypeptide reads, in one-letter code: Class I histocompatibility antigen, Gogo-A*0101 alpha chain (365 aa).

The first 24 residues, 1 to 24 (MAVMAPRTLVLLLSGALALTQTWA), serve as a signal peptide directing secretion. Residues 25–114 (GSHSMRYFST…LRGYYNQSED (90 aa)) form an alpha-1 region. The Extracellular portion of the chain corresponds to 25–308 (GSHSMRYFST…EPSSQPTIPI (284 aa)). N-linked (GlcNAc...) asparagine glycosylation is present at Asn110. The tract at residues 115 to 206 (GSHTIQRMYG…ENGKETLQRT (92 aa)) is alpha-2. Cystine bridges form between Cys125-Cys188 and Cys227-Cys283. The interval 207–298 (DAPKTHMTHH…GLPEPLTLRW (92 aa)) is alpha-3. The region spanning 209 to 297 (PKTHMTHHAV…EGLPEPLTLR (89 aa)) is the Ig-like C1-type domain. Residues 299–308 (EPSSQPTIPI) are connecting peptide. The chain crosses the membrane as a helical span at residues 309–332 (VGIIAGLVLFGAVIAGAVVAAVRW). Topologically, residues 333-365 (RRKSSDRKGGSYSQAASSDSAQGSDVSLTACKV) are cytoplasmic. The tract at residues 338-365 (DRKGGSYSQAASSDSAQGSDVSLTACKV) is disordered. Over residues 342 to 359 (GSYSQAASSDSAQGSDVS) the composition is skewed to low complexity. A Phosphoserine modification is found at Ser343. Tyr344 carries the post-translational modification Phosphotyrosine. Residues Ser345, Ser349, Ser350, Ser352, Ser356, and Ser359 each carry the phosphoserine modification.

The protein belongs to the MHC class I family. Heterodimer of an alpha chain and a beta chain (beta-2-microglobulin).

Its subcellular location is the membrane. In terms of biological role, involved in the presentation of foreign antigens to the immune system. The polypeptide is Class I histocompatibility antigen, Gogo-A*0101 alpha chain (Gorilla gorilla gorilla (Western lowland gorilla)).